The following is a 350-amino-acid chain: Transmembrane protein 185B (350 aa).

Helical transmembrane passes span 16–36 (LIYT…DGII), 41–61 (WAVF…ASVG), 81–101 (FKAM…EVLV), 111–131 (FWLL…AACV), 168–188 (WLVV…VVLY), 211–231 (VTMA…EVLL), and 240–260 (TFSY…LMAT).

It belongs to the TMEM185 family.

It is found in the membrane. The sequence is that of Transmembrane protein 185B (TMEM185B) from Homo sapiens (Human).